The sequence spans 400 residues: 1-deoxy-D-xylulose 5-phosphate reductoisomerase (400 aa).

NADPH is bound by residues Thr10, Gly11, Ser12, Ile13, Gly36, Asn38, and Asn124. Residue Lys125 coordinates 1-deoxy-D-xylulose 5-phosphate. Glu126 contacts NADPH. Asp150 is a Mn(2+) binding site. 1-deoxy-D-xylulose 5-phosphate is bound by residues Ser151, Glu152, Ser186, and His209. Glu152 contacts Mn(2+). Gly215 provides a ligand contact to NADPH. Positions 222, 227, 228, and 231 each coordinate 1-deoxy-D-xylulose 5-phosphate. A Mn(2+)-binding site is contributed by Glu231.

The protein belongs to the DXR family. The cofactor is Mg(2+). It depends on Mn(2+) as a cofactor.

The enzyme catalyses 2-C-methyl-D-erythritol 4-phosphate + NADP(+) = 1-deoxy-D-xylulose 5-phosphate + NADPH + H(+). Its pathway is isoprenoid biosynthesis; isopentenyl diphosphate biosynthesis via DXP pathway; isopentenyl diphosphate from 1-deoxy-D-xylulose 5-phosphate: step 1/6. Catalyzes the NADPH-dependent rearrangement and reduction of 1-deoxy-D-xylulose-5-phosphate (DXP) to 2-C-methyl-D-erythritol 4-phosphate (MEP). This chain is 1-deoxy-D-xylulose 5-phosphate reductoisomerase, found in Aliivibrio fischeri (strain MJ11) (Vibrio fischeri).